A 66-amino-acid chain; its full sequence is Large ribosomal subunit protein bL35 (66 aa).

Residues 21–40 form a disordered region; the sequence is KIKSTQSAKRHGMTKRSKRS. Positions 28–40 are enriched in basic residues; it reads AKRHGMTKRSKRS.

Belongs to the bacterial ribosomal protein bL35 family.

This chain is Large ribosomal subunit protein bL35, found in Ehrlichia canis (strain Jake).